Here is a 314-residue protein sequence, read N- to C-terminus: tRNA-cytidine(32) 2-sulfurtransferase (314 aa).

The PP-loop motif signature appears at 46-51 (SGGKDS). Cys121, Cys124, and Cys212 together coordinate [4Fe-4S] cluster.

Belongs to the TtcA family. Homodimer. Mg(2+) serves as cofactor. It depends on [4Fe-4S] cluster as a cofactor.

It is found in the cytoplasm. The enzyme catalyses cytidine(32) in tRNA + S-sulfanyl-L-cysteinyl-[cysteine desulfurase] + AH2 + ATP = 2-thiocytidine(32) in tRNA + L-cysteinyl-[cysteine desulfurase] + A + AMP + diphosphate + H(+). Its pathway is tRNA modification. In terms of biological role, catalyzes the ATP-dependent 2-thiolation of cytidine in position 32 of tRNA, to form 2-thiocytidine (s(2)C32). The sulfur atoms are provided by the cysteine/cysteine desulfurase (IscS) system. This is tRNA-cytidine(32) 2-sulfurtransferase from Nitrosomonas europaea (strain ATCC 19718 / CIP 103999 / KCTC 2705 / NBRC 14298).